A 224-amino-acid chain; its full sequence is Phosphoglycolate phosphatase (224 aa).

The Nucleophile role is filled by Asp11. Mg(2+) is bound by residues Asp11, Asp13, and Asp177.

The protein belongs to the HAD-like hydrolase superfamily. CbbY/CbbZ/Gph/YieH family. It depends on Mg(2+) as a cofactor.

It carries out the reaction 2-phosphoglycolate + H2O = glycolate + phosphate. It participates in organic acid metabolism; glycolate biosynthesis; glycolate from 2-phosphoglycolate: step 1/1. Its function is as follows. Specifically catalyzes the dephosphorylation of 2-phosphoglycolate. Is involved in the dissimilation of the intracellular 2-phosphoglycolate formed during the DNA repair of 3'-phosphoglycolate ends, a major class of DNA lesions induced by oxidative stress. The polypeptide is Phosphoglycolate phosphatase (Haemophilus influenzae (strain ATCC 51907 / DSM 11121 / KW20 / Rd)).